A 543-amino-acid polypeptide reads, in one-letter code: Rop guanine nucleotide exchange factor 11 (543 aa).

The tract at residues 61 to 89 (QPGKCGSVDRPSLPIGGVTPNRNDKLPRV) is disordered. A PRONE domain is found at 95 to 456 (MEALIILQAA…QLTQEPTNNA (362 aa)).

Interacts with ARAC4/ROP2, ARAC3/ROP, ARAC9/ROP8, PHYA and PHYB. Highly expressed in elongating regions of roots and pollen grains. Expressed in flowers, and at lower levels in leaves and stems.

The protein localises to the cytoplasm. Its function is as follows. Guanine-nucleotide exchange factor (GEF) that acts as an activator of Rop (Rho of plants) GTPases by promoting the exchange of GDP for GTP. Functions as a light-signaling switch that functions in root growth and development through the activation of Rop in a phytochrome-dependent manner. May act as a negative regulator of phytochrome-mediated primary root development. The chain is Rop guanine nucleotide exchange factor 11 (ROPGEF11) from Arabidopsis thaliana (Mouse-ear cress).